We begin with the raw amino-acid sequence, 284 residues long: 4-hydroxybenzoate octaprenyltransferase (284 aa).

Transmembrane regions (helical) follow at residues 14 to 34 (VHQPVGFFLLLWPTLWALWIT), 41 to 61 (FIVLSLFIVGVMCMRSAGCVI), 93 to 113 (WVFFILILIALIVVCVFNNII), 134 to 154 (YIYLPQLVLGIIFSWSILIVY), 166 to 186 (WLLFLANTIWVVLYDTEYAMV), 209 to 229 (IVIGILQLLTVFILYIIGIVE), 233 to 253 (IIFYLFSIVGASILFIWQQVL), and 262 to 282 (CLWAFLSNSYVGMLIFVGIVL).

It belongs to the UbiA prenyltransferase family. Mg(2+) serves as cofactor.

It localises to the cell inner membrane. It carries out the reaction all-trans-octaprenyl diphosphate + 4-hydroxybenzoate = 4-hydroxy-3-(all-trans-octaprenyl)benzoate + diphosphate. It participates in cofactor biosynthesis; ubiquinone biosynthesis. Functionally, catalyzes the prenylation of para-hydroxybenzoate (PHB) with an all-trans polyprenyl group. Mediates the second step in the final reaction sequence of ubiquinone-8 (UQ-8) biosynthesis, which is the condensation of the polyisoprenoid side chain with PHB, generating the first membrane-bound Q intermediate 3-octaprenyl-4-hydroxybenzoate. In Blochmanniella floridana, this protein is 4-hydroxybenzoate octaprenyltransferase.